A 65-amino-acid polypeptide reads, in one-letter code: Dybowskin-2CDYa (65 aa).

Residues 1-22 form the signal peptide; sequence MFTLKKSLLLLFFIGVIKLSLC. Residues 23-47 constitute a propeptide that is removed on maturation; that stretch reads EEERNADDDERRDDPDEMDVEVENR. A compositionally biased stretch (acidic residues) spans 26–43; sequence RNADDDERRDDPDEMDVE. The disordered stretch occupies residues 26 to 65; sequence RNADDDERRDDPDEMDVEVENRSAVGRHGRRFGLRKHRKH. Positions 50–65 are enriched in basic residues; the sequence is VGRHGRRFGLRKHRKH.

This sequence belongs to the frog skin active peptide (FSAP) family. Brevinin subfamily. Expressed by the skin glands.

The protein localises to the secreted. Functionally, antimicrobial peptide. Has activity against the Gram-positive bacterium S.aureus (MIC=6 uM) and the Gram-negative bacterium E.coli (MIC=3 uM). Lacks hemolytic activity against human erythrocytes. The sequence is that of Dybowskin-2CDYa from Rana dybowskii (Dybovsky's frog).